We begin with the raw amino-acid sequence, 61 residues long: Temporin-MT3 (61 aa).

A signal peptide spans Met1 to Cys22. Residues Glu23–Glu44 constitute a propeptide, removed in mature form. A Leucine amide modification is found at Leu59.

It belongs to the frog skin active peptide (FSAP) family. Temporin subfamily. Expressed by the skin glands.

The protein localises to the secreted. In terms of biological role, antimicrobial peptide. The sequence is that of Temporin-MT3 from Amolops mantzorum (Sichuan torrent frog).